The chain runs to 2319 residues: A-kinase anchor protein 6 (2319 aa).

Composition is skewed to polar residues over residues M1–R12 and G324–P339. 5 disordered regions span residues M1 to S24, V301 to P369, S493 to G532, L566 to V614, and T691 to K757. Positions S340 to S351 are enriched in low complexity. 2 stretches are compositionally biased toward polar residues: residues G518–G532 and L566–I591. Residues S697–S711 are compositionally biased toward low complexity. The span at K735 to S754 shows a compositional bias: basic and acidic residues. Spectrin repeat units follow at residues Q762–E848 and E1036–D1150. Residue S1073 is modified to Phosphoserine. The tract at residues K1250 to Q1272 is disordered. Residues S1255–A1265 are compositionally biased toward acidic residues. Residues S1570 and S1595 each carry the phosphoserine modification. Disordered regions lie at residues V1821–T1842, E1900–K1925, and K1963–S1983. 3 stretches are compositionally biased toward polar residues: residues D1830–T1842, N1911–L1920, and N1972–K1982. Positions I2063–Q2076 are PKA-RII subunit binding domain. Residues F2198–S2215 are compositionally biased toward low complexity. The interval F2198–R2319 is disordered.

In terms of assembly, interacts with RII subunit of PKA, phosphatase 2B (calcineurin) and AKAP79. Interacts with SYNPO2. As to expression, highly expressed in cardiac and skeletal muscle, followed by brain.

The protein localises to the sarcoplasmic reticulum. It localises to the nucleus membrane. In terms of biological role, binds to type II regulatory subunits of protein kinase A and anchors/targets them to the nuclear membrane or sarcoplasmic reticulum. May act as an adapter for assembling multiprotein complexes. The sequence is that of A-kinase anchor protein 6 (AKAP6) from Homo sapiens (Human).